We begin with the raw amino-acid sequence, 467 residues long: Chromosomal replication initiator protein DnaA (467 aa).

Residues Met-1–Ser-85 are domain I, interacts with DnaA modulators. A domain II region spans residues Ser-85–Ser-130. The tract at residues Asn-131–Ala-347 is domain III, AAA+ region. ATP-binding residues include Gly-175, Gly-177, Lys-178, and Thr-179. Residues Asn-348–Ser-467 form a domain IV, binds dsDNA region.

It belongs to the DnaA family. As to quaternary structure, oligomerizes as a right-handed, spiral filament on DNA at oriC.

The protein localises to the cytoplasm. Plays an essential role in the initiation and regulation of chromosomal replication. ATP-DnaA binds to the origin of replication (oriC) to initiate formation of the DNA replication initiation complex once per cell cycle. Binds the DnaA box (a 9 base pair repeat at the origin) and separates the double-stranded (ds)DNA. Forms a right-handed helical filament on oriC DNA; dsDNA binds to the exterior of the filament while single-stranded (ss)DNA is stabiized in the filament's interior. The ATP-DnaA-oriC complex binds and stabilizes one strand of the AT-rich DNA unwinding element (DUE), permitting loading of DNA polymerase. After initiation quickly degrades to an ADP-DnaA complex that is not apt for DNA replication. Binds acidic phospholipids. The protein is Chromosomal replication initiator protein DnaA of Klebsiella pneumoniae (strain 342).